The sequence spans 177 residues: MTAPTAPSMAAPPAPSMVSRMTALFLRVLTFAFLMVSLVIMTTNTGTIEIGIDEFKVRSKDFYSYRYMLAAIAFGLTYTILQIALTLNHISKRNGAQTSGDGNLVFDFYGDKVVSYILATGAAAAFGATKELKTQLAGLGGDKFFNKGYASASLLLLGFVCTAILSVFSSYALPKKV.

The Cytoplasmic portion of the chain corresponds to 1–20 (MTAPTAPSMAAPPAPSMVSR). The helical transmembrane segment at 21-41 (MTALFLRVLTFAFLMVSLVIM) threads the bilayer. Residues 42–66 (TTNTGTIEIGIDEFKVRSKDFYSYR) are Extracellular-facing. The chain crosses the membrane as a helical span at residues 67 to 87 (YMLAAIAFGLTYTILQIALTL). The Cytoplasmic portion of the chain corresponds to 88 to 107 (NHISKRNGAQTSGDGNLVFD). A helical membrane pass occupies residues 108–128 (FYGDKVVSYILATGAAAAFGA). Topologically, residues 129–153 (TKELKTQLAGLGGDKFFNKGYASAS) are extracellular. Residues 154 to 174 (LLLLGFVCTAILSVFSSYALP) form a helical membrane-spanning segment. Residues 175 to 177 (KKV) are Cytoplasmic-facing.

This sequence belongs to the Casparian strip membrane proteins (CASP) family. Homodimer and heterodimers.

The protein resides in the cell membrane. The protein is CASP-like protein 4D1 of Populus trichocarpa (Western balsam poplar).